Here is a 1367-residue protein sequence, read N- to C-terminus: Paired amphipathic helix protein Sin3-like 2 (1367 aa).

A disordered region spans residues 14 to 44 (QFKRPLGSSRGESYEQSPITGGGSIGEGGIN). A compositionally biased stretch (gly residues) spans 33–42 (TGGGSIGEGG). PAH domains lie at 46–116 (QKLT…LPKG) and 130–200 (KTVE…LPDS). Residues 212–322 (SQAQRYDDRG…EAYSGPASHS (111 aa)) form a disordered region. Composition is skewed to basic and acidic residues over residues 230-286 (MFME…SRDL) and 299-311 (FSEKRKSSRRMEG). In terms of domain architecture, PAH 3 spans 327-396 (LKSMYNQAFL…DEFNQFFERC (70 aa)). Disordered regions lie at residues 417-446 (EENLSRSVKGEEKDREHKRDVEAAKEKERS), 786-883 (DVHA…LSKP), 912-946 (QSDTSKANSNYDESGGPSKIEKEEGELSPVGDSED), and 958-1031 (ATAK…EGME). Composition is skewed to basic and acidic residues over residues 424-446 (VKGEEKDREHKRDVEAAKEKERS) and 806-819 (SSGKENLKDGDLAN). Polar residues-rich tracts occupy residues 851 to 876 (ATSSSSFPSGVENNNGKVGSRDSSGS) and 912 to 923 (QSDTSKANSNYD). Residues 958-967 (ATAKTEHSVE) are compositionally biased toward basic and acidic residues. Composition is skewed to acidic residues over residues 968-989 (AEGENDEDADDEDGDDASEAGE) and 997-1016 (IGDECSQDDNGVEEEGEHDE). Residue Ser1023 is modified to Phosphoserine.

Its subcellular location is the nucleus. Acts as a transcriptional repressor. Plays roles in regulating gene expression and genome stability. The polypeptide is Paired amphipathic helix protein Sin3-like 2 (SNL2) (Arabidopsis thaliana (Mouse-ear cress)).